The sequence spans 118 residues: uncharacterized protein (118 aa).

The chain crosses the membrane as a helical span at residues 95 to 115; that stretch reads IIINLVIILAMYAPEIIGKLL.

It belongs to the M.jannaschii MJ0023/MJ0349/MJ1072/MJ1074/MJ1107/MJECL16 family.

Its subcellular location is the membrane. This is an uncharacterized protein from Methanocaldococcus jannaschii (strain ATCC 43067 / DSM 2661 / JAL-1 / JCM 10045 / NBRC 100440) (Methanococcus jannaschii).